Consider the following 427-residue polypeptide: Probable anaerobic glycerol-3-phosphate dehydrogenase subunit B (427 aa).

Belongs to the anaerobic G-3-P dehydrogenase subunit B family. The cofactor is FMN.

The enzyme catalyses a quinone + sn-glycerol 3-phosphate = dihydroxyacetone phosphate + a quinol. Its pathway is polyol metabolism; glycerol degradation via glycerol kinase pathway; glycerone phosphate from sn-glycerol 3-phosphate (anaerobic route): step 1/1. The polypeptide is Probable anaerobic glycerol-3-phosphate dehydrogenase subunit B (Halobacterium salinarum (strain ATCC 29341 / DSM 671 / R1)).